The primary structure comprises 95 residues: Defensin (95 aa).

A signal peptide spans 1–17; the sequence is MKNYVFALLVVTAVAIA. The propeptide occupies 18-55; the sequence is LPNEDKNAPMRVHLLPQKEDESLKLEVTPVKEHHRTRR. Cystine bridges form between C58/C85, C71/C91, and C75/C93.

It belongs to the invertebrate defensin family. Type 1 subfamily.

The protein localises to the secreted. Antibacterial peptide mostly active against Gram-positive bacteria. The sequence is that of Defensin from Formica aquilonia (Red wood ant).